Here is a 240-residue protein sequence, read N- to C-terminus: Orotidine 5'-phosphate decarboxylase (240 aa).

Residues D15, K37, 64-73, T125, R186, Q195, G215, and R216 contribute to the substrate site; that span reads DLKYHDIPNT. Catalysis depends on K66, which acts as the Proton donor.

The protein belongs to the OMP decarboxylase family. Type 1 subfamily. Homodimer.

It catalyses the reaction orotidine 5'-phosphate + H(+) = UMP + CO2. Its pathway is pyrimidine metabolism; UMP biosynthesis via de novo pathway; UMP from orotate: step 2/2. Catalyzes the decarboxylation of orotidine 5'-monophosphate (OMP) to uridine 5'-monophosphate (UMP). The protein is Orotidine 5'-phosphate decarboxylase of Pelobacter propionicus (strain DSM 2379 / NBRC 103807 / OttBd1).